The primary structure comprises 22 residues: Unknown endosperm protein L (22 aa).

Positions 1-11 (MRHSNKIRDEE) are enriched in basic and acidic residues. The tract at residues 1–22 (MRHSNKIRDEEMVNNTRLNXXA) is disordered. Polar residues predominate over residues 13 to 22 (VNNTRLNXXA).

The N-terminus is blocked.

The chain is Unknown endosperm protein L from Hordeum vulgare (Barley).